We begin with the raw amino-acid sequence, 149 residues long: 3-dehydroquinate dehydratase (149 aa).

The active-site Proton acceptor is Y26. Substrate is bound by residues N77, H83, and D90. Residue H103 is the Proton donor of the active site. Substrate contacts are provided by residues 104–105 (LS) and R114.

It belongs to the type-II 3-dehydroquinase family. Homododecamer.

The catalysed reaction is 3-dehydroquinate = 3-dehydroshikimate + H2O. Its pathway is metabolic intermediate biosynthesis; chorismate biosynthesis; chorismate from D-erythrose 4-phosphate and phosphoenolpyruvate: step 3/7. Functionally, catalyzes a trans-dehydration via an enolate intermediate. This is 3-dehydroquinate dehydratase from Aeromonas salmonicida (strain A449).